We begin with the raw amino-acid sequence, 195 residues long: Probable peroxygenase 4 (195 aa).

One can recognise an EF-hand domain in the interval 14–49; that stretch reads EEDNFLQRHVAFFDRNKDGIVYPSETFQGFRAIGCG. A heme-binding site is contributed by H22. The Ca(2+) site is built by D27, N29, D31, and E38. Positions 70 to 79 match the Proline-knot motif; it reads PGKGFSIWFP. Residue S177 is modified to Phosphoserine.

It belongs to the caleosin family. As to quaternary structure, homodimer. The cofactor is heme b. Requires Ca(2+) as cofactor. As to expression, expressed in roots, leaves, stems, shoots, flowers and germinated seeds. Barely detected in dry seeds prior to germination. Preferentially expressed in vascular bundles and in guard cells.

The protein localises to the lipid droplet. It carries out the reaction RH + ROOH = ROH + ROH.. Its function is as follows. Calcium-binding peroxygenase involved in the degradation of storage lipid in oil bodies. May be involved in the interaction between oil bodies and vacuoles during seed germination. Acts as a negative regulator of abscisic acid responses in non-seed tissues. This Arabidopsis thaliana (Mouse-ear cress) protein is Probable peroxygenase 4 (PXG4).